Here is a 754-residue protein sequence, read N- to C-terminus: 5-methyltetrahydropteroyltriglutamate--homocysteine methyltransferase (754 aa).

5-methyltetrahydropteroyltri-L-glutamate-binding positions include Arg17–Lys20 and Lys117. Residues Ile431–Ser433 and Glu484 contribute to the L-homocysteine site. Residues Ile431–Ser433 and Glu484 each bind L-methionine. 5-methyltetrahydropteroyltri-L-glutamate-binding positions include Arg515–Cys516 and Trp561. An L-homocysteine-binding site is contributed by Asp599. Residue Asp599 coordinates L-methionine. Glu605 contributes to the 5-methyltetrahydropteroyltri-L-glutamate binding site. Residues His641, Cys643, and Glu665 each contribute to the Zn(2+) site. His694 (proton donor) is an active-site residue. Residue Cys726 participates in Zn(2+) binding.

The protein belongs to the vitamin-B12 independent methionine synthase family. Zn(2+) is required as a cofactor.

The catalysed reaction is 5-methyltetrahydropteroyltri-L-glutamate + L-homocysteine = tetrahydropteroyltri-L-glutamate + L-methionine. The protein operates within amino-acid biosynthesis; L-methionine biosynthesis via de novo pathway; L-methionine from L-homocysteine (MetE route): step 1/1. Catalyzes the transfer of a methyl group from 5-methyltetrahydrofolate to homocysteine resulting in methionine formation. In Salmonella choleraesuis (strain SC-B67), this protein is 5-methyltetrahydropteroyltriglutamate--homocysteine methyltransferase.